Here is a 257-residue protein sequence, read N- to C-terminus: 3-dehydroquinate dehydratase (257 aa).

3-dehydroquinate is bound by residues 50–52 and Arg86; that span reads EWR. The Proton donor/acceptor role is filled by His147. Lys174 (schiff-base intermediate with substrate) is an active-site residue. 3 residues coordinate 3-dehydroquinate: Arg216, Ser235, and Gln239.

It belongs to the type-I 3-dehydroquinase family. In terms of assembly, homodimer.

It catalyses the reaction 3-dehydroquinate = 3-dehydroshikimate + H2O. It functions in the pathway metabolic intermediate biosynthesis; chorismate biosynthesis; chorismate from D-erythrose 4-phosphate and phosphoenolpyruvate: step 3/7. Involved in the third step of the chorismate pathway, which leads to the biosynthesis of aromatic amino acids. Catalyzes the cis-dehydration of 3-dehydroquinate (DHQ) and introduces the first double bond of the aromatic ring to yield 3-dehydroshikimate. The chain is 3-dehydroquinate dehydratase from Geobacillus kaustophilus (strain HTA426).